The following is a 116-amino-acid chain: Vesicle-associated membrane protein 2 (116 aa).

The segment at 1–28 is disordered; that stretch reads MSATAATVPPAAPAGEGGPPAPPPNLTS. Residue Ser2 is modified to N-acetylserine. The Cytoplasmic segment spans residues 2–94; it reads SATAATVPPA…KRKYWWKNLK (93 aa). In terms of domain architecture, v-SNARE coiled-coil homology spans 31 to 91; sequence RLQQTQAQVD…AKLKRKYWWK (61 aa). A required for interaction with SEPT8 region spans residues 92-116; that stretch reads NLKMMIILGVICAIILIIIIVYFST. A helical; Anchor for type IV membrane protein membrane pass occupies residues 95-114; the sequence is MMIILGVICAIILIIIIVYF. Topologically, residues 115–116 are vesicular; it reads ST.

This sequence belongs to the synaptobrevin family. Part of the SNARE core complex containing SNAP25, VAMP2 and STX1A; this complex constitutes the basic catalytic machinery of the complex neurotransmitter release apparatus. Recruited to the SNARE complex following binding of the SNARE complex component STX1A to STXBP1. This complex binds to CPLX1. Interacts with VAPA and VAPB. Interacts (via N-terminus) with KCNB1 (via N-terminus and C-terminus); stimulates the channel inactivation rate of KCNB1. Interacts with POPDC1 and STX4. Interacts with WDFY2, PRKCZ and PRKCI. Forms a complex with WDFY2 and PRKCZ. Interacts with SEPT8; the interaction inhibits interaction of VAMP2 with SYP. Interacts with SYP; the interaction is inhibited by interaction with SEPT8. Interacts with PICALM. Interacts with alpha-synuclein/SNCA. Interacts with STX3 isoform 3B. Phosphorylated by PRKCZ in vitro and this phosphorylation is increased in the presence of WDFY2. Post-translationally, (Microbial infection) Targeted and hydrolyzed by C.botulinum neurotoxin type B (BoNT/B, botB); 20 hours after treatment of spinal cord cells almost all the protein has been digested. BoNT/B hydrolyzes the 76-Gln-|-Phe-77 bond and inhibits neurotransmitter release. In terms of processing, (Microbial infection) Targeted and hydrolyzed by C.tetani toxin (tetX); 20 hours after treatment of spinal cord cells almost all the protein has been digested. Tetanus toxin hydrolyzes the 76-Gln-|-Phe-77 bond and inhibits neurotransmitter release. As to expression, expressed in the outer plexiform layer of the retina (at protein level).

Its subcellular location is the cytoplasmic vesicle. The protein localises to the secretory vesicle. It localises to the synaptic vesicle membrane. It is found in the cell membrane. In terms of biological role, involved in the targeting and/or fusion of transport vesicles to their target membrane. Major SNARE protein of synaptic vesicles which mediates fusion of synaptic vesicles to release neurotransmitters. Essential for fast vesicular exocytosis and activity-dependent neurotransmitter release as well as fast endocytosis that mediates rapid reuse of synaptic vesicles. Modulates the gating characteristics of the delayed rectifier voltage-dependent potassium channel KCNB1. In Mus musculus (Mouse), this protein is Vesicle-associated membrane protein 2 (Vamp2).